We begin with the raw amino-acid sequence, 356 residues long: D-alanine--D-alanine ligase (356 aa).

The region spanning 134 to 339 (KQLFEHRGLP…YPELITKLIE (206 aa)) is the ATP-grasp domain. Position 167–222 (167–222 (NDKLNYPVFVKPANLGSSVGISKCNNEAELKEGIKEAFQFDRKLVIEQGVNAREIE)) interacts with ATP. Residues Asp293, Glu306, and Asn308 each coordinate Mg(2+).

It belongs to the D-alanine--D-alanine ligase family. The cofactor is Mg(2+). It depends on Mn(2+) as a cofactor.

The protein resides in the cytoplasm. The enzyme catalyses 2 D-alanine + ATP = D-alanyl-D-alanine + ADP + phosphate + H(+). Its pathway is cell wall biogenesis; peptidoglycan biosynthesis. Functionally, cell wall formation. This chain is D-alanine--D-alanine ligase, found in Staphylococcus aureus (strain MSSA476).